The following is a 649-amino-acid chain: Sodium/nucleoside cotransporter 1 (649 aa).

Topologically, residues 1-80 (MENDPSRRRE…ARSFCREHMQ (80 aa)) are cytoplasmic. A helical membrane pass occupies residues 81–104 (LFRWIGTGLLCTGLSAFLLVACLL). Over 105-109 (DFQRA) the chain is Extracellular. Residues 110–128 (LALFVLTCVVLTFLGHRLL) form a helical membrane-spanning segment. Over 129–147 (KRLLGPKLRRFLKPQGHPR) the chain is Cytoplasmic. Residues 148-167 (LLLWFKRGLALAAFLGLVLW) traverse the membrane as a helical segment. Over 168–178 (LSLDTSQRPEQ) the chain is Extracellular. A helical membrane pass occupies residues 179–195 (LVSFAGICVFVALLFAC). Over 196 to 201 (SKHHCA) the chain is Cytoplasmic. A helical membrane pass occupies residues 202-222 (VSWRAVSWGLGLQFVLGLLVI). Over 223–261 (RTEPGFIAFEWLGEQIRIFLSYTKAGSSFVFGEALVKDV) the chain is Extracellular. The chain crosses the membrane as a helical span at residues 262 to 283 (FAFQVLPIIVFFSCVISVLYHV). At 284–294 (GLMQWVILKIA) the chain is on the cytoplasmic side. A helical membrane pass occupies residues 295 to 318 (WLMQVTMGTTATETLSVAGNIFVS). Residues 319-337 (QTEAPLLIRPYLADMTLSE) are Extracellular-facing. The helical transmembrane segment at 338–360 (VHVVMTGGYATIAGSLLGAYISF) threads the bilayer. The Cytoplasmic segment spans residues 361-366 (GIDATS). The chain crosses the membrane as a helical span at residues 367-386 (LIAASVMAAPCALALSKLVY). Over 387 to 423 (PEVEESKFRREEGVKLTYGDAQNLIEAASTGAAISVK) the chain is Extracellular. A helical transmembrane segment spans residues 424–446 (VVANIAANLIAFLAVLDFINAAL). Topologically, residues 447-457 (SWLGDMVDIQG) are cytoplasmic. Residues 458–479 (LSFQLICSYILRPVAFLMGVAW) traverse the membrane as a helical segment. Residues 480-534 (EDCPVVAELLGIKLFLNEFVAYQDLSKYKQRRLAGAEEWVGDRKQWISVRAEVLT) lie on the Extracellular side of the membrane. A helical transmembrane segment spans residues 535–558 (TFALCGFANFSSIGIMLGGLTSMV). Topologically, residues 559–569 (PQRKSDFSQIV) are cytoplasmic. The helical transmembrane segment at 570 to 592 (LRALFTGACVSLVNACMAGILYM) threads the bilayer. At 593–649 (PRGAEVDCMSLLNTTLSSSSFEIYQCCREAFQSVNPEFSPEALDNCCRFYNHTICAQ) the chain is on the extracellular side. 2 N-linked (GlcNAc...) asparagine glycosylation sites follow: Asn-605 and Asn-643.

This sequence belongs to the concentrative nucleoside transporter (CNT) (TC 2.A.41) family. In terms of processing, N-glycosylated. N-glycosylation is required for localization to the plasma membrane and the transporter activity. In terms of tissue distribution, expressed in kidney.

Its subcellular location is the cell membrane. It is found in the apical cell membrane. The catalysed reaction is uridine(out) + Na(+)(out) = uridine(in) + Na(+)(in). It catalyses the reaction thymidine(out) + Na(+)(out) = thymidine(in) + Na(+)(in). The enzyme catalyses cytidine(out) + Na(+)(out) = cytidine(in) + Na(+)(in). It carries out the reaction adenosine(out) + Na(+)(out) = adenosine(in) + Na(+)(in). Its activity is regulated as follows. Due to its high apparent affinity but slow transport, adenosine could act as a negative regulator of pyrimidine transport under some conditions. Sodium and pyrimidine nucleoside symporter of the plasma membrane that imports uridine, thymidine and cytidine into cells by coupling their transport to the transmembrane sodium electrochemical gradient. Also transports adenosine, an atypical substrate transported with high apparent affinity, but low maximum velocity. Therefore, exhibits the transport characteristics of the nucleoside transport system cit or N2 subtype (N2/cit). Involved in renal nucleoside (re)absorption. In Homo sapiens (Human), this protein is Sodium/nucleoside cotransporter 1.